Reading from the N-terminus, the 818-residue chain is Myosin-A (818 aa).

Residue serine 19 is modified to Phosphoserine; by PKG. Residues 97 to 771 (MSFGDIGLLN…GAKILTKIQR (675 aa)) enclose the Myosin motor domain. Position 191 to 198 (191 to 198 (GESGAGKT)) interacts with ATP. The interval 661–671 (PHFIRCIKPNE) is actin-binding. The tail stretch occupies residues 773-818 (KLVEWENCVSVIEAAILKHKYKQKVNKNIPSLLRVQAHIRKKMVAQ).

The protein belongs to the TRAFAC class myosin-kinesin ATPase superfamily. Myosin family. Component of the glideosome complex composed of GAP50, GAP45, MTIP and MyoA; the complex is formed during the late schizont stage and in merozoites. MyoA, MTIP and GAP45 probably form an initial complex in the cytoplasm which is then recruited to the outer face of the inner membrane complex via the interaction with GAP50. Interacts with ACT1.

The protein resides in the cell membrane. Its function is as follows. Myosins are actin-based motor molecules with ATPase activity. Unconventional myosins serve in intracellular movements. Their highly divergent tails are presumed to bind to membranous compartments, which would be moved relative to actin filaments. In Plasmodium falciparum (isolate 3D7), this protein is Myosin-A.